The following is a 401-amino-acid chain: Adaptive-response sensory kinase SasA (401 aa).

In terms of domain architecture, Histidine kinase spans 175-400 (MLVHDLRNPL…WFHFTLPVYP (226 aa)). Residue His-178 is modified to Phosphohistidine; by autocatalysis.

In terms of assembly, homooligomerizes. Interacts with KaiC. Participates in the KaiABC clock complex, whose core is composed of a KaiC homohexamer, 6 KaiB and up to 6 KaiA dimers. SasA and KaiB(fs) compete to bind to KaiC.

It carries out the reaction ATP + protein L-histidine = ADP + protein N-phospho-L-histidine.. Its function is as follows. Member of the two-component regulatory system SasA/RpaA involved in genome-wide circadian gene expression. One of several clock output pathways. Participates in the Kai clock protein complex, the main circadian regulator in cyanobacteria, via its interaction with KaiC. KaiC enhances the autophosphorylation activity of SasA, which then transfers its phosphate group to RpaA to activate it. In addition to its output function, recruits fold-shifted KaiB (KaiB(fs)) to KaiC to cooperatively form the KaiB(6):KaiC(6) complex (independent of SasA kinase activity). Required for robustness of the circadian rhythm of gene expression and is involved in clock output, also required for adaptation to light/dark cycles. The polypeptide is Adaptive-response sensory kinase SasA (Trichormus variabilis (strain ATCC 29413 / PCC 7937) (Anabaena variabilis)).